A 118-amino-acid polypeptide reads, in one-letter code: MNQKKINRIRRGKRTRLNIRESGKPSLIVNKTPRHIYAQIISGEGNKVLASISTLNKEVADAVHYTGNIESATKVGQMIAEKAKSLGIESLAFDRNGFRYHGRVKALADAARAAGLQF.

Belongs to the universal ribosomal protein uL18 family. Part of the 50S ribosomal subunit; part of the 5S rRNA/L5/L18/L25 subcomplex. Contacts the 5S and 23S rRNAs.

Functionally, this is one of the proteins that bind and probably mediate the attachment of the 5S RNA into the large ribosomal subunit, where it forms part of the central protuberance. The sequence is that of Large ribosomal subunit protein uL18 from Dichelobacter nodosus (strain VCS1703A).